The chain runs to 360 residues: Decorin (360 aa).

The N-terminal stretch at 1–16 (MKATIIFLLLAQVSWA) is a signal peptide. Positions 17-30 (GPFQQRGLFDFMLE) are excised as a propeptide. O-linked (Xyl...) (glycosaminoglycan) serine glycosylation is present at serine 34. Disulfide bonds link cysteine 55/cysteine 61 and cysteine 59/cysteine 68. 12 LRR repeats span residues 74-94 (DKVP…NNKI), 95-118 (TEIK…NNKI), 119-142 (SKIS…KNHL), 143-163 (KELP…ENEI), 164-187 (TKVR…TNPL), 188-213 (KSSG…DTNI), 214-234 (TTIP…GNKI), 235-258 (TKVD…FNSI), 259-282 (SAVD…NNKL), 283-305 (IKVP…NNNI), 306-335 (SAVG…SNPV), and 336-360 (QYWE…GNYK). The N-linked (GlcNAc...) asparagine glycan is linked to asparagine 212. Asparagine 263 and asparagine 304 each carry an N-linked (GlcNAc...) asparagine glycan. A disulfide bridge connects residues cysteine 314 and cysteine 347.

This sequence belongs to the small leucine-rich proteoglycan (SLRP) family. SLRP class I subfamily. Binds to type I and type II collagen, fibronectin and TGF-beta. Forms a ternary complex with MFAP2 and ELN. Interacts with DPT. Post-translationally, the attached glycosaminoglycan chain can be either chondroitin sulfate or dermatan sulfate depending upon the tissue of origin.

The protein resides in the secreted. The protein localises to the extracellular space. It localises to the extracellular matrix. In terms of biological role, may affect the rate of fibrils formation. The protein is Decorin (DCN) of Equus caballus (Horse).